A 278-amino-acid chain; its full sequence is Putative carbamate hydrolase RutD (278 aa).

It belongs to the AB hydrolase superfamily. Hydrolase RutD family.

It catalyses the reaction carbamate + 2 H(+) = NH4(+) + CO2. In terms of biological role, involved in pyrimidine catabolism. May facilitate the hydrolysis of carbamate, a reaction that can also occur spontaneously. The protein is Putative carbamate hydrolase RutD of Yersinia enterocolitica serotype O:8 / biotype 1B (strain NCTC 13174 / 8081).